Reading from the N-terminus, the 294-residue chain is P32 adhesin (294 aa).

The next 2 membrane-spanning stretches (helical) occupy residues 11 to 31 (LVGV…VGLT) and 66 to 86 (VVGA…GIGI). Repeat copies occupy residues 172 to 193 (GGPM…PPQM) and 194 to 214 (GGMP…PPQM). The segment at 172–214 (GGPMQPNQMGMRPGFNQMPPQMGGMPPNQMGMRPGFNQMPPQM) is 2 X 22 AA repeats. The disordered stretch occupies residues 234–294 (RPGFRPQPGG…AGFPPQNGPR (61 aa)). Residues 241-256 (PGGGVPMGNKAGGGFN) are compositionally biased toward gly residues.

It is found in the cell projection. It localises to the attachment organelle membrane. Functionally, adhesin necessary for successful cytadherence and virulence. The protein is P32 adhesin (mgc2) of Mycoplasmoides gallisepticum (strain R(low / passage 15 / clone 2)) (Mycoplasma gallisepticum).